The chain runs to 173 residues: Large ribosomal subunit protein bL9 (173 aa).

This sequence belongs to the bacterial ribosomal protein bL9 family.

Functionally, binds to the 23S rRNA. The chain is Large ribosomal subunit protein bL9 from Chlamydia felis (strain Fe/C-56) (Chlamydophila felis).